The sequence spans 331 residues: 6-phosphogluconolactonase (331 aa).

Lys-287 bears the N6-acetyllysine mark.

The protein belongs to the cycloisomerase 2 family.

The catalysed reaction is 6-phospho-D-glucono-1,5-lactone + H2O = 6-phospho-D-gluconate + H(+). Its pathway is carbohydrate degradation; pentose phosphate pathway; D-ribulose 5-phosphate from D-glucose 6-phosphate (oxidative stage): step 2/3. Catalyzes the hydrolysis of 6-phosphogluconolactone to 6-phosphogluconate. This chain is 6-phosphogluconolactonase, found in Escherichia fergusonii (strain ATCC 35469 / DSM 13698 / CCUG 18766 / IAM 14443 / JCM 21226 / LMG 7866 / NBRC 102419 / NCTC 12128 / CDC 0568-73).